We begin with the raw amino-acid sequence, 271 residues long: Formamidopyrimidine-DNA glycosylase (271 aa).

Residue Pro2 is the Schiff-base intermediate with DNA of the active site. Glu3 functions as the Proton donor in the catalytic mechanism. The Proton donor; for beta-elimination activity role is filled by Lys58. DNA contacts are provided by His92, Arg111, and Arg152. The FPG-type zinc finger occupies 237-271 (MVYGREGEACRHCGGELKHATIGQRATVWCAACQR). Residue Arg261 is the Proton donor; for delta-elimination activity of the active site.

It belongs to the FPG family. Monomer. Requires Zn(2+) as cofactor.

It catalyses the reaction Hydrolysis of DNA containing ring-opened 7-methylguanine residues, releasing 2,6-diamino-4-hydroxy-5-(N-methyl)formamidopyrimidine.. The catalysed reaction is 2'-deoxyribonucleotide-(2'-deoxyribose 5'-phosphate)-2'-deoxyribonucleotide-DNA = a 3'-end 2'-deoxyribonucleotide-(2,3-dehydro-2,3-deoxyribose 5'-phosphate)-DNA + a 5'-end 5'-phospho-2'-deoxyribonucleoside-DNA + H(+). Its function is as follows. Involved in base excision repair of DNA damaged by oxidation or by mutagenic agents. Acts as a DNA glycosylase that recognizes and removes damaged bases. Has a preference for oxidized purines, such as 7,8-dihydro-8-oxoguanine (8-oxoG). Has AP (apurinic/apyrimidinic) lyase activity and introduces nicks in the DNA strand. Cleaves the DNA backbone by beta-delta elimination to generate a single-strand break at the site of the removed base with both 3'- and 5'-phosphates. This chain is Formamidopyrimidine-DNA glycosylase, found in Xanthomonas campestris pv. campestris (strain ATCC 33913 / DSM 3586 / NCPPB 528 / LMG 568 / P 25).